Reading from the N-terminus, the 469-residue chain is Asparagine--tRNA ligase (469 aa).

It belongs to the class-II aminoacyl-tRNA synthetase family. As to quaternary structure, homodimer.

It localises to the cytoplasm. The catalysed reaction is tRNA(Asn) + L-asparagine + ATP = L-asparaginyl-tRNA(Asn) + AMP + diphosphate + H(+). In Porphyromonas gingivalis (strain ATCC 33277 / DSM 20709 / CIP 103683 / JCM 12257 / NCTC 11834 / 2561), this protein is Asparagine--tRNA ligase.